Consider the following 327-residue polypeptide: Transcription factor bHLH48 (327 aa).

Residues 137–179 (EPAETDSMVENQNQSYSSGKRKEREKKVKSSTKKNKSSVESDK) form a disordered region. In terms of domain architecture, bHLH spans 191 to 241 (QATDNHSLAERARREKINARMKLLQELVPGCDKIQGTALVLDEIINHVQTL).

In terms of assembly, homodimer. As to expression, expressed in leaves, stems, and flowers.

It is found in the nucleus. This is Transcription factor bHLH48 (BHLH48) from Arabidopsis thaliana (Mouse-ear cress).